The sequence spans 379 residues: MSDFLPFSRPAMGAEELAAVKTVLDSGWITTGPKNQELEAEFCRLTGNQYAVAVSSATAGMHIALMALGIGEGDEVITPSMTWVSTLNMIVLLGANPVMVDVDRDTLMVTPEHIEAAITPQTKAIIPVHYAGAPADLDAIYALGERYGIPVIEDAAHATGTSYKGRHIGARGTAIFSFHAIKNITCAEGGIVVTDNPQFADKLRSLKFHGLGVDAWDRQSGGRAPQAEVLAPGYKYNLPDLNAAIALAQLQKLDALNARRAAIAAQYHQAMADLPFQPLSLPAWEHIHAWHLFIIRVDETRCGITRDALMASLKTKGIGTGLHFRAAHTQKYYRERFPTLTLPDTEWNSERICSLPLFPDMTESDFDRVITALHQIAGQ.

K182 bears the N6-(pyridoxal phosphate)lysine mark.

This sequence belongs to the DegT/DnrJ/EryC1 family. ArnB subfamily. In terms of assembly, homodimer. Pyridoxal 5'-phosphate is required as a cofactor.

The catalysed reaction is UDP-4-amino-4-deoxy-beta-L-arabinose + 2-oxoglutarate = UDP-beta-L-threo-pentopyranos-4-ulose + L-glutamate. It participates in nucleotide-sugar biosynthesis; UDP-4-deoxy-4-formamido-beta-L-arabinose biosynthesis; UDP-4-deoxy-4-formamido-beta-L-arabinose from UDP-alpha-D-glucuronate: step 2/3. Its pathway is bacterial outer membrane biogenesis; lipopolysaccharide biosynthesis. Catalyzes the conversion of UDP-4-keto-arabinose (UDP-Ara4O) to UDP-4-amino-4-deoxy-L-arabinose (UDP-L-Ara4N). The modified arabinose is attached to lipid A and is required for resistance to polymyxin and cationic antimicrobial peptides. This is UDP-4-amino-4-deoxy-L-arabinose--oxoglutarate aminotransferase from Salmonella schwarzengrund (strain CVM19633).